Reading from the N-terminus, the 469-residue chain is Tubulin gamma-2 chain (469 aa).

A GTP-binding site is contributed by 142-148; sequence AGGTGSG.

The protein belongs to the tubulin family.

It localises to the cytoplasm. It is found in the cytoskeleton. The protein resides in the microtubule organizing center. Functionally, tubulin is the major constituent of microtubules. The gamma chain is found at microtubule organizing centers (MTOC) such as the spindle poles, suggesting that it is involved in the minus-end nucleation of microtubule assembly. This chain is Tubulin gamma-2 chain (TUBG2), found in Oryza sativa subsp. japonica (Rice).